We begin with the raw amino-acid sequence, 152 residues long: UPF0756 membrane protein JDM1_1594 (152 aa).

4 consecutive transmembrane segments (helical) span residues 25 to 45 (ATVVVLLIKLIPNTSKLLTTI), 52 to 72 (WGVTVITVAILIPIATGQIGF), 85 to 105 (WIAVACGVLVSVLSFHGVGLL), and 115 to 135 (LVFGTIMGVVLLKGIAAGPII).

It belongs to the UPF0756 family.

It localises to the cell membrane. This Lactiplantibacillus plantarum (strain JDM1) (Lactobacillus plantarum) protein is UPF0756 membrane protein JDM1_1594.